We begin with the raw amino-acid sequence, 385 residues long: MATLVREADGTARPGERPSSGARVFIAMSGGVDSSVAAARLCDAGYEVVGVTLHLWDYPDDGSVKSRCCAPEDQHDARRVADHLGIPHYTFDRRALFREHVVDPFVEAYLAGETPSPCVACNRSVKLRELFPLAERLGVSWVATGHYARVVLEEGGARLYRGRDRHKDQSYFLHMLRSDELSRLLFPLGDSTKDEVRAEAIARGLPGAEKGESQELCFIPSGRYAPFVADRAADRLRPGPIVDRDGRVVGSHGGVHGFTVGQRKGIGVSLGRPAFVVGLDAASGAVHLGDEGDLYAAGAEIADAVWCDDAVFPLEAEVRVRARHEAAPGIIERRRDPATGAESFVARFASPVRSVSPGQMAVVYRGDRVLGGGRIKAALRSQAAS.

Residues 27–34 (AMSGGVDS) and leucine 53 each bind ATP. Cysteine 121 acts as the Nucleophile in catalysis. Cysteine 121 and cysteine 217 are oxidised to a cystine. Position 145 (glycine 145) interacts with ATP. An interaction with tRNA region spans residues 167–169 (KDQ). Cysteine 217 functions as the Cysteine persulfide intermediate in the catalytic mechanism.

The protein belongs to the MnmA/TRMU family.

Its subcellular location is the cytoplasm. It carries out the reaction S-sulfanyl-L-cysteinyl-[protein] + uridine(34) in tRNA + AH2 + ATP = 2-thiouridine(34) in tRNA + L-cysteinyl-[protein] + A + AMP + diphosphate + H(+). Catalyzes the 2-thiolation of uridine at the wobble position (U34) of tRNA, leading to the formation of s(2)U34. The polypeptide is tRNA-specific 2-thiouridylase MnmA (Sorangium cellulosum (strain So ce56) (Polyangium cellulosum (strain So ce56))).